The primary structure comprises 210 residues: Holliday junction resolvase RecU (210 aa).

The tract at residues 1–34 (MAFHYPNGQPYSNHETKQPKKQGRHTSPTTLYGK) is disordered. Positions 90, 92, 105, and 124 each coordinate Mg(2+).

The protein belongs to the RecU family. Mg(2+) is required as a cofactor.

It localises to the cytoplasm. The enzyme catalyses Endonucleolytic cleavage at a junction such as a reciprocal single-stranded crossover between two homologous DNA duplexes (Holliday junction).. Its function is as follows. Endonuclease that resolves Holliday junction intermediates in genetic recombination. Cleaves mobile four-strand junctions by introducing symmetrical nicks in paired strands. Promotes annealing of linear ssDNA with homologous dsDNA. Required for DNA repair, homologous recombination and chromosome segregation. This is Holliday junction resolvase RecU from Latilactobacillus sakei subsp. sakei (strain 23K) (Lactobacillus sakei subsp. sakei).